We begin with the raw amino-acid sequence, 354 residues long: S-adenosylmethionine:tRNA ribosyltransferase-isomerase (354 aa).

Belongs to the QueA family. Monomer.

The protein localises to the cytoplasm. The catalysed reaction is 7-aminomethyl-7-carbaguanosine(34) in tRNA + S-adenosyl-L-methionine = epoxyqueuosine(34) in tRNA + adenine + L-methionine + 2 H(+). The protein operates within tRNA modification; tRNA-queuosine biosynthesis. Transfers and isomerizes the ribose moiety from AdoMet to the 7-aminomethyl group of 7-deazaguanine (preQ1-tRNA) to give epoxyqueuosine (oQ-tRNA). The chain is S-adenosylmethionine:tRNA ribosyltransferase-isomerase from Pseudomonas fluorescens (strain ATCC BAA-477 / NRRL B-23932 / Pf-5).